The following is a 300-amino-acid chain: Protoheme IX farnesyltransferase (300 aa).

Helical transmembrane passes span 24 to 44, 46 to 66, 94 to 114, 118 to 138, 146 to 166, 172 to 192, 224 to 244, and 278 to 298; these read VTQLAVFCAVIGMFLATPGMV, WHVLIGGTIGIWLLAGAAFAI, PQILLFSAVLGSAGAWTLYTF, LTMWLTIATFVGYAVVYTLLL, IVIGGASGAMPPALGWAAVTG, AWILVLIIFVWTPPHFWVLAL, VILFAVTLMPFISGMSGVVYL, and IVYLSLLFAALLVDHYARPLL.

This sequence belongs to the UbiA prenyltransferase family. Protoheme IX farnesyltransferase subfamily.

It is found in the cell inner membrane. It carries out the reaction heme b + (2E,6E)-farnesyl diphosphate + H2O = Fe(II)-heme o + diphosphate. It functions in the pathway porphyrin-containing compound metabolism; heme O biosynthesis; heme O from protoheme: step 1/1. Converts heme B (protoheme IX) to heme O by substitution of the vinyl group on carbon 2 of heme B porphyrin ring with a hydroxyethyl farnesyl side group. The protein is Protoheme IX farnesyltransferase of Burkholderia ambifaria (strain MC40-6).